Reading from the N-terminus, the 397-residue chain is Protein irld-34 (397 aa).

The polypeptide is Protein irld-34 (Caenorhabditis elegans).